A 567-amino-acid polypeptide reads, in one-letter code: Low-affinity glucose transporter HXT3 (567 aa).

The segment covering 1–29 (MNSTPDLISPQKSSENSNADLPSNSSQVM) has biased composition (polar residues). Positions 1–30 (MNSTPDLISPQKSSENSNADLPSNSSQVMN) are disordered. At 1-57 (MNSTPDLISPQKSSENSNADLPSNSSQVMNMPEEKGVQDDFQAEADQVLTNPNTGKG) the chain is on the cytoplasmic side. A Phosphoserine modification is found at serine 23. The chain crosses the membrane as a helical span at residues 58-78 (AYVTVSICCVMVAFGGFVFGW). Residues 79 to 113 (DTGTISGFVAQTDFLRRFGMKHKDGSYYLSKVRTG) are Extracellular-facing. Residues 114–134 (LIVSIFNIGCAIGGIILAKLG) traverse the membrane as a helical segment. Residues 135-140 (DMYGRK) are Cytoplasmic-facing. The chain crosses the membrane as a helical span at residues 141–161 (MGLIVVVVIYIIGIIIQIASI). Topologically, residues 162–171 (NKWYQYFIGR) are extracellular. The chain crosses the membrane as a helical span at residues 172–192 (IISGLGVGGIAVLSPMLISEV). At 193 to 198 (APKEMR) the chain is on the cytoplasmic side. The helical transmembrane segment at 199–219 (GTLVSCYQLMITLGIFLGYCT) threads the bilayer. Residues 220 to 233 (NFGTKNYSNSVQWR) are Extracellular-facing. An N-linked (GlcNAc...) asparagine glycan is attached at asparagine 225. Residues 234 to 254 (VPLGLCFAWALFMIGGMTFVP) traverse the membrane as a helical segment. Residues 255-337 (ESPRYLVEAG…IQSLQQLTGD (83 aa)) are Cytoplasmic-facing. The chain crosses the membrane as a helical span at residues 338-354 (NYFFYYGTTVFNAVGMS). At 355-360 (DSFETS) the chain is on the extracellular side. Residues 361-378 (IVFGVVNFFSTCCSLYTV) traverse the membrane as a helical segment. Over 379–385 (DRFGRRN) the chain is Cytoplasmic. A helical membrane pass occupies residues 386–406 (CLLYGAIGMVCCYVVYASVGV). The Extracellular segment spans residues 407 to 428 (TRLWPNGEGNGSSKGAGNCMIV). Asparagine 416 carries N-linked (GlcNAc...) asparagine glycosylation. A helical membrane pass occupies residues 429-449 (FACFYIFCFATTWAPIAYVVI). At 450–466 (SETFPLRVKSKAMSIAT) the chain is on the cytoplasmic side. The chain crosses the membrane as a helical span at residues 467-487 (AANWLWGFLIGFFTPFITGAI). Asparagine 488 is a topological domain (extracellular). The chain crosses the membrane as a helical span at residues 489-509 (FYYGYVFMGCMVFAYFYVFFF). Residues 510–567 (VPETKGLTLEEVNDMYAEGVLPWKSASWVPTSQRGANYDADALMHDDQPFYKKMFGKK) are Cytoplasmic-facing.

It belongs to the major facilitator superfamily. Sugar transporter (TC 2.A.1.1) family.

It is found in the membrane. Functionally, low-affinity glucose transporter. The sequence is that of Low-affinity glucose transporter HXT3 (HXT3) from Saccharomyces cerevisiae (strain ATCC 204508 / S288c) (Baker's yeast).